Reading from the N-terminus, the 187-residue chain is MQCPYCQHTNSRVLESRSSEGGQSIRRRRECLNCKHRFTTYERIEFVPITVIKHDGKKESFDASKLLRGMVRACEKTGISHQRLETIVDDIEAYLQQRPQREVTTHEIGQLVLKYLREENEVAYIRFASVYGRFKGIKDFVETLDQLQEETISSPMSQWSKSSTRDRDQSQTSPCLSLTHNGSENSR.

The tract at residues 1–21 (MQCPYCQHTNSRVLESRSSEG) is disordered. The segment at 3-34 (CPYCQHTNSRVLESRSSEGGQSIRRRRECLNC) is a zinc-finger region. An ATP-cone domain is found at 49 to 139 (ITVIKHDGKK…VYGRFKGIKD (91 aa)). Composition is skewed to polar residues over residues 152 to 162 (ISSPMSQWSKS) and 170 to 187 (SQTS…ENSR). The tract at residues 152–187 (ISSPMSQWSKSSTRDRDQSQTSPCLSLTHNGSENSR) is disordered.

This sequence belongs to the NrdR family. Requires Zn(2+) as cofactor.

In terms of biological role, negatively regulates transcription of bacterial ribonucleotide reductase nrd genes and operons by binding to NrdR-boxes. The protein is Transcriptional repressor NrdR of Crocosphaera subtropica (strain ATCC 51142 / BH68) (Cyanothece sp. (strain ATCC 51142)).